A 335-amino-acid polypeptide reads, in one-letter code: Phospho-N-acetylmuramoyl-pentapeptide-transferase (335 aa).

10 helical membrane passes run 3-23, 53-73, 78-98, 118-138, 143-163, 175-195, 200-220, 226-246, 251-271, and 314-334; these read LTLIAGLISLLLTALIMPHFI, GGTVFLLVASFVSFLFAILFF, SMGLITGILAIVLIYGFIGFL, LSLQIVGGLIFYFLHVVPSGI, VFGFPVHLGLLYIFFVLFWVV, IDGLASISVVISLLTYSVIAI, YDVLLLCGIMIGALLGFFIFN, VFMGDVGSLALGAMLAAISIA, WTLLVIGLVYVFETSSVMLQV, and VDAFLWSVGAVSSLIVLAILY.

The protein belongs to the glycosyltransferase 4 family. MraY subfamily. It depends on Mg(2+) as a cofactor.

The protein localises to the cell membrane. It catalyses the reaction UDP-N-acetyl-alpha-D-muramoyl-L-alanyl-gamma-D-glutamyl-L-lysyl-D-alanyl-D-alanine + di-trans,octa-cis-undecaprenyl phosphate = Mur2Ac(oyl-L-Ala-gamma-D-Glu-L-Lys-D-Ala-D-Ala)-di-trans,octa-cis-undecaprenyl diphosphate + UMP. Its pathway is cell wall biogenesis; peptidoglycan biosynthesis. In terms of biological role, catalyzes the initial step of the lipid cycle reactions in the biosynthesis of the cell wall peptidoglycan: transfers peptidoglycan precursor phospho-MurNAc-pentapeptide from UDP-MurNAc-pentapeptide onto the lipid carrier undecaprenyl phosphate, yielding undecaprenyl-pyrophosphoryl-MurNAc-pentapeptide, known as lipid I. This chain is Phospho-N-acetylmuramoyl-pentapeptide-transferase, found in Streptococcus uberis (strain ATCC BAA-854 / 0140J).